Consider the following 314-residue polypeptide: L-lactate dehydrogenase 2 (314 aa).

NAD(+)-binding positions include valine 16, aspartate 37, lysine 42, tyrosine 68, and 82-83 (GL). Substrate contacts are provided by residues glutamine 85, arginine 91, and 123–126 (NPVD). NAD(+) is bound by residues 121–123 (ATN) and serine 146. A substrate-binding site is contributed by 151-154 (DSAR). Beta-D-fructose 1,6-bisphosphate contacts are provided by arginine 156 and histidine 171. Histidine 178 (proton acceptor) is an active-site residue. Tyrosine 223 is subject to Phosphotyrosine. Threonine 232 contacts substrate.

It belongs to the LDH/MDH superfamily. LDH family. In terms of assembly, homotetramer.

The protein localises to the cytoplasm. It catalyses the reaction (S)-lactate + NAD(+) = pyruvate + NADH + H(+). The protein operates within fermentation; pyruvate fermentation to lactate; (S)-lactate from pyruvate: step 1/1. With respect to regulation, allosterically activated by fructose 1,6-bisphosphate (FBP). Its function is as follows. Catalyzes the conversion of lactate to pyruvate. The sequence is that of L-lactate dehydrogenase 2 from Bacillus cereus (strain ATCC 14579 / DSM 31 / CCUG 7414 / JCM 2152 / NBRC 15305 / NCIMB 9373 / NCTC 2599 / NRRL B-3711).